Reading from the N-terminus, the 855-residue chain is Alanine--tRNA ligase (855 aa).

Zn(2+)-binding residues include His-555, His-559, Cys-657, and His-661.

It belongs to the class-II aminoacyl-tRNA synthetase family. Requires Zn(2+) as cofactor.

Its subcellular location is the cytoplasm. It catalyses the reaction tRNA(Ala) + L-alanine + ATP = L-alanyl-tRNA(Ala) + AMP + diphosphate. Catalyzes the attachment of alanine to tRNA(Ala) in a two-step reaction: alanine is first activated by ATP to form Ala-AMP and then transferred to the acceptor end of tRNA(Ala). Also edits incorrectly charged Ser-tRNA(Ala) and Gly-tRNA(Ala) via its editing domain. The sequence is that of Alanine--tRNA ligase from Wolinella succinogenes (strain ATCC 29543 / DSM 1740 / CCUG 13145 / JCM 31913 / LMG 7466 / NCTC 11488 / FDC 602W) (Vibrio succinogenes).